The primary structure comprises 358 residues: Sesquiterpene synthase Agr3 (358 aa).

Mg(2+)-binding residues include D99, N246, S250, and E254. A DDXXD motif motif is present at residues 99–103; sequence DNISD. 2 residues coordinate (2E,6E)-farnesyl diphosphate: R334 and Y335.

Belongs to the terpene synthase family. Mg(2+) is required as a cofactor.

It catalyses the reaction (2E,6E)-farnesyl diphosphate = alpha-muurolene + diphosphate. The catalysed reaction is (2E,6E)-farnesyl diphosphate = gamma-muurolene + diphosphate. It carries out the reaction (2E,6E)-farnesyl diphosphate = delta-cadinene + diphosphate. In terms of biological role, terpene cyclase that catalyzes the cyclization of farnesyl diphosphate (FPP) to various sesquiterpenes, including alpha-muurolene, gamma-muurolene, germacrene, delta-cadinene, delta-cadinol and cubenol. This chain is Sesquiterpene synthase Agr3, found in Cyclocybe aegerita (Black poplar mushroom).